The following is a 94-amino-acid chain: Alpha-galactosyl-binding lectin (94 aa).

Homodimer. Post-translationally, contains three disulfide bonds.

Its function is as follows. Alpha-galactosyl-binding lectin with preference for galactose-alpha-1,4-galactose. The chain is Alpha-galactosyl-binding lectin from Lyophyllum decastes (Fried chicken mushroom).